Reading from the N-terminus, the 149-residue chain is Large ribosomal subunit protein uL15 (149 aa).

Residues 1-52 (MSELLKLHHLRPAPGSNKAKIRKGRGEASKGKTAGRGTKGTKARSTVPAGFE) form a disordered region.

This sequence belongs to the universal ribosomal protein uL15 family. Part of the 50S ribosomal subunit.

In terms of biological role, binds to the 23S rRNA. The polypeptide is Large ribosomal subunit protein uL15 (Thermobifida fusca (strain YX)).